The chain runs to 497 residues: Histidine--tRNA ligase (497 aa).

This sequence belongs to the class-II aminoacyl-tRNA synthetase family. In terms of assembly, homodimer.

Its subcellular location is the cytoplasm. It catalyses the reaction tRNA(His) + L-histidine + ATP = L-histidyl-tRNA(His) + AMP + diphosphate + H(+). This Dinoroseobacter shibae (strain DSM 16493 / NCIMB 14021 / DFL 12) protein is Histidine--tRNA ligase.